The primary structure comprises 243 residues: Large ribosomal subunit protein uL30 (243 aa).

Positions methionine 1–alanine 31 are disordered. A compositionally biased stretch (low complexity) spans glutamine 18–glutamate 28.

This sequence belongs to the universal ribosomal protein uL30 family.

The protein is Large ribosomal subunit protein uL30 (RPL7) of Eremothecium gossypii (strain ATCC 10895 / CBS 109.51 / FGSC 9923 / NRRL Y-1056) (Yeast).